We begin with the raw amino-acid sequence, 465 residues long: Mitochondrial F-box protein MFB1 (465 aa).

In terms of domain architecture, F-box spans 14–60 (ERSLTNLPLNLLFRILSHLDMNDLQNIGKTCTLLRMLANENIVYRNA). The disordered stretch occupies residues 253 to 279 (FTKSRDPDYKEMTPTSTESSDSITRLR). The segment covering 254 to 263 (TKSRDPDYKE) has biased composition (basic and acidic residues). Polar residues predominate over residues 265–275 (TPTSTESSDSI).

The protein resides in the mitochondrion. The chain is Mitochondrial F-box protein MFB1 (MFB1) from Saccharomyces cerevisiae (strain ATCC 204508 / S288c) (Baker's yeast).